The sequence spans 222 residues: MIEAVAVDIDGTLTDASRVLSPVSVSVIRELEVPVILVTGNTHCFTRAAAVLFGVRHFVAENGGVISSDDRIEVVGDRKLCDEAYKHLKEKFNIKKFDSRYRLTDLVLIRGFDVDAASRYLESLNLPVDLVDTGFAIHIKNRGITKGTGLRRISERLGIPTKRIAAIGDSPSDIPMMEISGFPAAVGNAHPSVKSAARYVADRAFGEGFAEIIDHMRAAGMI.

Asp-8 serves as the catalytic Nucleophile. 2 residues coordinate Mg(2+): Asp-8 and Asp-10. Lys-146 serves as a coordination point for substrate. Positions 169 and 173 each coordinate Mg(2+).

Belongs to the archaeal SPP-like hydrolase family. Mg(2+) is required as a cofactor.

It carries out the reaction 2-phosphoglycolate + H2O = glycolate + phosphate. In terms of biological role, catalyzes the dephosphorylation of 2-phosphoglycolate. The protein is Phosphoglycolate phosphatase of Methanothrix thermoacetophila (strain DSM 6194 / JCM 14653 / NBRC 101360 / PT) (Methanosaeta thermophila).